Here is a 393-residue protein sequence, read N- to C-terminus: Formate-dependent phosphoribosylglycinamide formyltransferase (393 aa).

Residues 22–23 (EL) and E82 each bind N(1)-(5-phospho-beta-D-ribosyl)glycinamide. ATP is bound by residues R114, K155, 160-165 (SSGKGQ), 195-198 (EGFV), and E203. Residues 119-308 (RLAAEELGLP…EFALHARAIL (190 aa)) form the ATP-grasp domain. Residues E267 and E279 each coordinate Mg(2+). N(1)-(5-phospho-beta-D-ribosyl)glycinamide is bound by residues D286, K356, and 363 to 364 (RR).

Belongs to the PurK/PurT family. In terms of assembly, homodimer.

The enzyme catalyses N(1)-(5-phospho-beta-D-ribosyl)glycinamide + formate + ATP = N(2)-formyl-N(1)-(5-phospho-beta-D-ribosyl)glycinamide + ADP + phosphate + H(+). It functions in the pathway purine metabolism; IMP biosynthesis via de novo pathway; N(2)-formyl-N(1)-(5-phospho-D-ribosyl)glycinamide from N(1)-(5-phospho-D-ribosyl)glycinamide (formate route): step 1/1. Its function is as follows. Involved in the de novo purine biosynthesis. Catalyzes the transfer of formate to 5-phospho-ribosyl-glycinamide (GAR), producing 5-phospho-ribosyl-N-formylglycinamide (FGAR). Formate is provided by PurU via hydrolysis of 10-formyl-tetrahydrofolate. This chain is Formate-dependent phosphoribosylglycinamide formyltransferase, found in Nitratidesulfovibrio vulgaris (strain DSM 19637 / Miyazaki F) (Desulfovibrio vulgaris).